Here is a 91-residue protein sequence, read N- to C-terminus: MTRSAKKGPFCDAHLLKKVEVATSGKDKKPIKTWSRRSTILPEFIGLTIAVHNGRQHVPVYVTENMVGHKLGEFAITRTFKGHAADKKAKR.

It belongs to the universal ribosomal protein uS19 family.

In terms of biological role, protein S19 forms a complex with S13 that binds strongly to the 16S ribosomal RNA. The sequence is that of Small ribosomal subunit protein uS19 from Cupriavidus taiwanensis (strain DSM 17343 / BCRC 17206 / CCUG 44338 / CIP 107171 / LMG 19424 / R1) (Ralstonia taiwanensis (strain LMG 19424)).